The sequence spans 156 residues: Ribosome maturation factor RimP (156 aa).

Belongs to the RimP family.

Its subcellular location is the cytoplasm. Required for maturation of 30S ribosomal subunits. This Microcystis aeruginosa (strain NIES-843 / IAM M-2473) protein is Ribosome maturation factor RimP.